A 160-amino-acid chain; its full sequence is Cyclic pyranopterin monophosphate synthase (160 aa).

Substrate-binding positions include 76-78 (LCH) and 114-115 (ME). The active site involves D129.

Belongs to the MoaC family. Homohexamer; trimer of dimers.

The catalysed reaction is (8S)-3',8-cyclo-7,8-dihydroguanosine 5'-triphosphate = cyclic pyranopterin phosphate + diphosphate. The protein operates within cofactor biosynthesis; molybdopterin biosynthesis. Functionally, catalyzes the conversion of (8S)-3',8-cyclo-7,8-dihydroguanosine 5'-triphosphate to cyclic pyranopterin monophosphate (cPMP). This chain is Cyclic pyranopterin monophosphate synthase, found in Saccharophagus degradans (strain 2-40 / ATCC 43961 / DSM 17024).